Here is a 131-residue protein sequence, read N- to C-terminus: UPF0134 protein MPN_010 (131 aa).

This sequence belongs to the UPF0134 family.

This chain is UPF0134 protein MPN_010, found in Mycoplasma pneumoniae (strain ATCC 29342 / M129 / Subtype 1) (Mycoplasmoides pneumoniae).